Reading from the N-terminus, the 661-residue chain is FAST kinase domain-containing protein 3, mitochondrial (661 aa).

The RAP domain maps to 592-650 (VALCIDGPQRFCLDSKHLLGKEATKQRHLRLLGYQVVQLPYHELELLTSRLELVDYLQR).

The protein belongs to the FAST kinase family. In terms of tissue distribution, expression detected in spleen, testis, colon, heart, smooth muscle, kidney, brain, lung, liver, brown and white adipose tissue with highest expression in testis and smooth muscle.

The protein resides in the mitochondrion. Its function is as follows. Required for normal mitochondrial respiration. Increases steady-state levels and half-lives of a subset of mature mitochondrial mRNAs MT-ND2, MT-ND3, MT-CYTB, MT-CO2, and MT-ATP8/6. Promotes MT-CO1 mRNA translation and increases mitochondrial complex IV assembly and activity. The sequence is that of FAST kinase domain-containing protein 3, mitochondrial (Fastkd3) from Mus musculus (Mouse).